The chain runs to 126 residues: Aspartate 1-decarboxylase (126 aa).

Ser25 serves as the catalytic Schiff-base intermediate with substrate; via pyruvic acid. Ser25 bears the Pyruvic acid (Ser) mark. Residue Thr57 coordinates substrate. Tyr58 (proton donor) is an active-site residue. Position 73 to 75 (Gly73 to Ala75) interacts with substrate.

The protein belongs to the PanD family. In terms of assembly, heterooctamer of four alpha and four beta subunits. It depends on pyruvate as a cofactor. In terms of processing, is synthesized initially as an inactive proenzyme, which is activated by self-cleavage at a specific serine bond to produce a beta-subunit with a hydroxyl group at its C-terminus and an alpha-subunit with a pyruvoyl group at its N-terminus.

It localises to the cytoplasm. It catalyses the reaction L-aspartate + H(+) = beta-alanine + CO2. It participates in cofactor biosynthesis; (R)-pantothenate biosynthesis; beta-alanine from L-aspartate: step 1/1. Functionally, catalyzes the pyruvoyl-dependent decarboxylation of aspartate to produce beta-alanine. This Acinetobacter baumannii (strain ACICU) protein is Aspartate 1-decarboxylase.